We begin with the raw amino-acid sequence, 521 residues long: MRPSLLQYLKLLLLLALGGVTTMHVPKQDVPSSLEELTLDGHFSFHDVSAAAQDFGNLSSFPPVAVLHPGSVADIATTIRHVFLMGEHSTLTVAARGHGHSLYGQSQAAEGIIISMESLQSNTMRVNPGVSPYVDASGGELWINVLHETLKYGLAPKSWTDYLHLTVGGTLSNAGVSGQTFRHGPQISNVNELEIVTGRGDVITCSPEQNSDLFHAALGGLGQFGVITRARIPLEPAPKMVRWLRVLYLDFTSFTEDQEMLISAEKTFDYIEGFVIINRTGILNNWRSSFNPQDPVRSSQFESDGKVLFCLEMTKNFNPDEADVMEQEVNTLLSQLRYMPSSLFHTDVTYIEFLDRVHSSEMKLRAKGMWEVPHPWLNIIIPRSMIHKFAKEVFGKILKDSNNGPILLYPVNKSRWDNRTSVVIPDEEVFYLVAFLSSALGPHNIKHTLDLNYRIIEFSDKAGIGVKQYLPNYTTEQEWQSHFGARWDTFQQRKKAYDPLAILAPGQRIFQKASASLPLPS.

The N-terminal stretch at Met1–Thr22 is a signal peptide. N-linked (GlcNAc...) asparagine glycosylation is present at Asn57. Residues Ser59 to Ala237 form the FAD-binding PCMH-type domain. FAD contacts are provided by Ala95, Gly97, and Gly99. The residue at position 100 (His100) is a Pros-8alpha-FAD histidine. FAD-binding residues include Ser101, Gln105, Asp161, Thr166, Ser172, Val176, and Ile227. N-linked (GlcNAc...) asparagine glycosylation is found at Asn278, Asn412, and Asn418. Tyr469 is an FAD binding site. A glycan (N-linked (GlcNAc...) asparagine) is linked at Asn472. Gln507 contributes to the FAD binding site.

It belongs to the oxygen-dependent FAD-linked oxidoreductase family. As to quaternary structure, monomer. FAD is required as a cofactor. As to expression, expressed in inflorescence meristems.

It localises to the secreted. The protein resides in the extracellular space. The protein localises to the cytoplasm. Its subcellular location is the cytosol. It is found in the nucleus. It catalyses the reaction N(6)-dimethylallyladenine + A + H2O = 3-methyl-2-butenal + adenine + AH2. Catalyzes the oxidation of cytokinins, a family of N(6)-substituted adenine derivatives that are plant hormones, where the substituent is an isopentenyl group. Possesses cytokinin oxidase activity toward trans-zeatin (tZ) and N6-(2-isopentenyl)adenine (2iP) in vitro. Functions as a primary strigolactone-responsive gene to regulate rice tillering, plant height, and panicle size, likely via a secondary response gene, RR5, which encodes a cytokinin-inducible rice type-A response regulator that seems to act as negative regulator of the cytokinin signaling. The sequence is that of Cytokinin dehydrogenase 9 from Oryza sativa subsp. japonica (Rice).